A 714-amino-acid polypeptide reads, in one-letter code: Pre-mRNA-splicing factor CLF1 (714 aa).

HAT repeat units follow at residues 48 to 80, 83 to 115, 117 to 149, 151 to 182, 184 to 215, 265 to 305, 315 to 347, 349 to 384, 394 to 430, 435 to 470, 472 to 510, and 555 to 586; these read SFQL…WEVK, HDFP…FELS, KNIT…TEET, KNYQ…YEKR, DEYD…FEMN, KEYE…FEKS, SIMI…ILQQ, DNNE…IWVK, GSIE…FEIR, NGLA…LEQK, GEWD…FEKN, and MRYA…FESS.

This sequence belongs to the crooked-neck family. As to quaternary structure, associated with the spliceosome.

The protein localises to the nucleus. Functionally, involved in pre-mRNA splicing and cell cycle progression. Required for the spliceosome assembly and initiation of the DNA replication. The chain is Pre-mRNA-splicing factor CLF1 (CLF1) from Debaryomyces hansenii (strain ATCC 36239 / CBS 767 / BCRC 21394 / JCM 1990 / NBRC 0083 / IGC 2968) (Yeast).